The sequence spans 122 residues: Large ribosomal subunit protein uL14 (122 aa).

It belongs to the universal ribosomal protein uL14 family. As to quaternary structure, part of the 50S ribosomal subunit. Forms a cluster with proteins L3 and L19. In the 70S ribosome, L14 and L19 interact and together make contacts with the 16S rRNA in bridges B5 and B8.

Its function is as follows. Binds to 23S rRNA. Forms part of two intersubunit bridges in the 70S ribosome. This Heliobacterium modesticaldum (strain ATCC 51547 / Ice1) protein is Large ribosomal subunit protein uL14.